The chain runs to 439 residues: Chromosomal replication initiator protein DnaA (439 aa).

The segment at 1–75 (MESWSRCLER…GIREVVLAIG (75 aa)) is domain I, interacts with DnaA modulators. The segment at 75–101 (GSRPKTTELTVPVDTTGRLSQTVPFNG) is domain II. A domain III, AAA+ region region spans residues 102–319 (NLDTHYNFDN…GALNTLVARA (218 aa)). The ATP site is built by Gly147, Gly149, Lys150, and Thr151. The segment at 320 to 439 (NFTGRAVTIE…WDKLMRKFSE (120 aa)) is domain IV, binds dsDNA.

It belongs to the DnaA family. In terms of assembly, oligomerizes as a right-handed, spiral filament on DNA at oriC.

The protein resides in the cytoplasm. Its function is as follows. Plays an essential role in the initiation and regulation of chromosomal replication. ATP-DnaA binds to the origin of replication (oriC) to initiate formation of the DNA replication initiation complex once per cell cycle. Binds the DnaA box (a 9 base pair repeat at the origin) and separates the double-stranded (ds)DNA. Forms a right-handed helical filament on oriC DNA; dsDNA binds to the exterior of the filament while single-stranded (ss)DNA is stabiized in the filament's interior. The ATP-DnaA-oriC complex binds and stabilizes one strand of the AT-rich DNA unwinding element (DUE), permitting loading of DNA polymerase. After initiation quickly degrades to an ADP-DnaA complex that is not apt for DNA replication. Binds acidic phospholipids. This Xylella fastidiosa (strain Temecula1 / ATCC 700964) protein is Chromosomal replication initiator protein DnaA.